The following is a 387-amino-acid chain: 1-deoxy-D-xylulose 5-phosphate reductoisomerase (387 aa).

NADPH-binding residues include Thr-10, Gly-11, Ser-12, Val-13, Asn-38, and Asn-119. Lys-120 contacts 1-deoxy-D-xylulose 5-phosphate. Position 121 (Glu-121) interacts with NADPH. Asp-145 is a binding site for Mn(2+). Positions 146, 147, 170, and 193 each coordinate 1-deoxy-D-xylulose 5-phosphate. A Mn(2+)-binding site is contributed by Glu-147. Gly-199 contacts NADPH. 1-deoxy-D-xylulose 5-phosphate is bound by residues Ser-206, Asn-211, Lys-212, and Glu-215. Residue Glu-215 coordinates Mn(2+).

It belongs to the DXR family. Mg(2+) serves as cofactor. Requires Mn(2+) as cofactor.

The enzyme catalyses 2-C-methyl-D-erythritol 4-phosphate + NADP(+) = 1-deoxy-D-xylulose 5-phosphate + NADPH + H(+). Its pathway is isoprenoid biosynthesis; isopentenyl diphosphate biosynthesis via DXP pathway; isopentenyl diphosphate from 1-deoxy-D-xylulose 5-phosphate: step 1/6. In terms of biological role, catalyzes the NADPH-dependent rearrangement and reduction of 1-deoxy-D-xylulose-5-phosphate (DXP) to 2-C-methyl-D-erythritol 4-phosphate (MEP). The chain is 1-deoxy-D-xylulose 5-phosphate reductoisomerase from Wolbachia sp. subsp. Drosophila simulans (strain wRi).